The following is a 404-amino-acid chain: Tryptophan synthase beta chain (404 aa).

K98 is modified (N6-(pyridoxal phosphate)lysine).

Belongs to the TrpB family. Tetramer of two alpha and two beta chains. Pyridoxal 5'-phosphate serves as cofactor.

It catalyses the reaction (1S,2R)-1-C-(indol-3-yl)glycerol 3-phosphate + L-serine = D-glyceraldehyde 3-phosphate + L-tryptophan + H2O. The protein operates within amino-acid biosynthesis; L-tryptophan biosynthesis; L-tryptophan from chorismate: step 5/5. Functionally, the beta subunit is responsible for the synthesis of L-tryptophan from indole and L-serine. This chain is Tryptophan synthase beta chain, found in Rhodopseudomonas palustris (strain BisB5).